The following is a 326-amino-acid chain: Cyclin-dependent kinase 6 (326 aa).

At methionine 1 the chain carries N-acetylmethionine. 2 positions are modified to phosphotyrosine: tyrosine 13 and tyrosine 24. One can recognise a Protein kinase domain in the interval 13-300 (YECVAEIGEG…AYSALSHPYF (288 aa)). ATP is bound by residues 19–27 (IGEGAYGKV) and lysine 43. Threonine 49 and threonine 70 each carry phosphothreonine. Aspartate 145 serves as the catalytic Proton acceptor. Residue threonine 177 is modified to Phosphothreonine. Lysine 264 carries the post-translational modification N6-acetyllysine. Threonine 325 bears the Phosphothreonine mark.

It belongs to the protein kinase superfamily. CMGC Ser/Thr protein kinase family. CDC2/CDKX subfamily. As to quaternary structure, interaction with D-type G1 cyclins. Cyclin binding promotes enzyme activation by phosphorylation at Thr-177. Binds to RUNX1, CDKN2D, FBXO7 and CDKN2C/p18-INK4c. Forms a cytoplasmic complex with Hsp90/HSP90AB1 and CDC37. FBXO7-binding promotes D-type cyclin binding. Interacts with Kaposi's sarcoma herpesvirus (KSHV) V-cyclin and herpesvirus saimiri (V-cyclin/ECLF2); the CDK6/V-cyclin complex phosphorylates NPM1 and thus lead to viral reactivation by reducing viral LANA levels. Thr-177 phosphorylation and Tyr-24 dephosphorylation promotes kinase activity. In terms of tissue distribution, expressed ubiquitously. Accumulates in squamous cell carcinomas, proliferating hematopoietic progenitor cells, beta-cells of pancreatic islets of Langerhans, and neuroblastomas. Reduced levels in differentiating cells.

The protein localises to the cytoplasm. Its subcellular location is the nucleus. The protein resides in the cell projection. It is found in the ruffle. It localises to the cytoskeleton. The protein localises to the microtubule organizing center. Its subcellular location is the centrosome. It carries out the reaction L-seryl-[protein] + ATP = O-phospho-L-seryl-[protein] + ADP + H(+). The catalysed reaction is L-threonyl-[protein] + ATP = O-phospho-L-threonyl-[protein] + ADP + H(+). With respect to regulation, inhibited by INK4 proteins (CDKN2C/p18-INK4c), aminopurvalanol, PD0332991, 4-(Pyrazol-4-yl)-pyrimidines and fisetin, a flavonol inhibitor. Activated by Thr-177 phosphorylation and Tyr-24 dephosphorylation. Stimulated by cyclin from herpesvirus saimiri (V-cyclin/ECLF2). Rapidly down-regulated prior to cell differentiation (e.g. erythroid and osteoblast). Functionally, serine/threonine-protein kinase involved in the control of the cell cycle and differentiation; promotes G1/S transition. Phosphorylates pRB/RB1 and NPM1. Interacts with D-type G1 cyclins during interphase at G1 to form a pRB/RB1 kinase and controls the entrance into the cell cycle. Involved in initiation and maintenance of cell cycle exit during cell differentiation; prevents cell proliferation and negatively regulates cell differentiation, but is required for the proliferation of specific cell types (e.g. erythroid and hematopoietic cells). Essential for cell proliferation within the dentate gyrus of the hippocampus and the subventricular zone of the lateral ventricles. Required during thymocyte development. Promotes the production of newborn neurons, probably by modulating G1 length. Promotes, at least in astrocytes, changes in patterns of gene expression, changes in the actin cytoskeleton including loss of stress fibers, and enhanced motility during cell differentiation. Prevents myeloid differentiation by interfering with RUNX1 and reducing its transcription transactivation activity, but promotes proliferation of normal myeloid progenitors. Delays senescence. Promotes the proliferation of beta-cells in pancreatic islets of Langerhans. May play a role in the centrosome organization during the cell cycle phases. In Homo sapiens (Human), this protein is Cyclin-dependent kinase 6 (CDK6).